Reading from the N-terminus, the 218-residue chain is N-(5'-phosphoribosyl)anthranilate isomerase (218 aa).

The protein belongs to the TrpF family.

It carries out the reaction N-(5-phospho-beta-D-ribosyl)anthranilate = 1-(2-carboxyphenylamino)-1-deoxy-D-ribulose 5-phosphate. It functions in the pathway amino-acid biosynthesis; L-tryptophan biosynthesis; L-tryptophan from chorismate: step 3/5. The chain is N-(5'-phosphoribosyl)anthranilate isomerase from Halobacterium salinarum (strain ATCC 29341 / DSM 671 / R1).